The chain runs to 254 residues: Phosphoglycerate mutase 1 (254 aa).

Residues 10–17 (RHGESAWN) and 23–24 (SG) contribute to the substrate site. Catalysis depends on His11, which acts as the Tele-phosphohistidine intermediate. Phosphoserine is present on residues Ser14 and Ser23. Tyr26 is subject to Phosphotyrosine. Position 31 is a phosphoserine (Ser31). Residues Arg62, 89–92 (ERHY), and Lys100 contribute to the substrate site. Glu89 acts as the Proton donor/acceptor in catalysis. Lys106 carries the post-translational modification N6-acetyllysine. 116-117 (RR) serves as a coordination point for substrate. Ser118 is modified (phosphoserine). Substrate is bound at residue 187-188 (GN). Position 251 is an N6-acetyllysine; alternate (Lys251). Lys251 is modified (N6-succinyllysine; alternate). N6-acetyllysine occurs at positions 253 and 254.

This sequence belongs to the phosphoglycerate mutase family. BPG-dependent PGAM subfamily. Homodimer. Acetylated at Lys-253, Lys-253 and Lys-254 under high glucose condition. Acetylation increases catalytic activity. Under glucose restriction SIRT1 levels dramatically increase and it deacetylates the enzyme.

The enzyme catalyses (2R)-2-phosphoglycerate = (2R)-3-phosphoglycerate. It catalyses the reaction (2R)-3-phospho-glyceroyl phosphate = (2R)-2,3-bisphosphoglycerate + H(+). Catalyzes the interconversion of 2-phosphoglycerate and 3-phosphoglyceratea crucial step in glycolysis, by using 2,3-bisphosphoglycerate. Also catalyzes the interconversion of (2R)-2,3-bisphosphoglycerate and (2R)-3-phospho-glyceroyl phosphate. The polypeptide is Phosphoglycerate mutase 1 (Mus musculus (Mouse)).